The sequence spans 738 residues: Glycogen [starch] synthase, muscle (738 aa).

Phosphoserine; by AMPK and PKA is present on Ser8. Ser11 is subject to Phosphoserine. Lys39 is a UDP binding site. 2 residues coordinate UDP-alpha-D-glucose: His205 and Arg211. Residues His291, Glu292, Gln294, His297, and Lys301 each contribute to the alpha-D-glucose 6-phosphate site. Arg331 provides a ligand contact to UDP. UDP-alpha-D-glucose is bound at residue Arg331. Ser412 is modified (phosphoserine). His501 provides a ligand contact to alpha-D-glucose 6-phosphate. UDP-alpha-D-glucose contacts are provided by Glu510, Trp512, and Gly513. Residue Thr515 coordinates UDP. Alpha-D-glucose 6-phosphate is bound by residues Arg582 and Arg586. Residues 632–738 (QGYRYPRPAS…PTSSLGEERN (107 aa)) form a disordered region. At Ser641 the chain carries Phosphoserine; by DYRK2, GSK3-alpha, GSK3-beta and PASK. Ser645, Ser649, Ser652, Ser653, Ser657, and Ser672 each carry phosphoserine. Residues 658-681 (EDEEEPRDGPLGEDSERYDEEEEA) show a composition bias toward acidic residues. A compositionally biased stretch (basic and acidic residues) spans 682–695 (AKDRRNIRAPEWPR). Phosphoserine occurs at positions 698, 709, and 711. Positions 698–738 (SCSSSTGGSKRSNSVDTGPSSSLSTPTEPLSPTSSLGEERN) are enriched in low complexity. Residues Thr722 and Thr724 each carry the phosphothreonine modification. Ser728 and Ser732 each carry phosphoserine.

This sequence belongs to the glycosyltransferase 3 family. Part of the GYS1-GYG1 complex, a heterooctamer composed of a tetramer of GYS1 and 2 dimers of GYG1, where each GYS1 protomer binds to one GYG1 subunit (via GYG1 C-terminus); the GYS1 tetramer may dissociate from GYG1 dimers to continue glycogen polymerization on its own. Primed phosphorylation at Ser-657 (site 5) by CSNK2A1 and CSNK2A2 is required for inhibitory phosphorylation at Ser-641 (site 3a), Ser-645 (site 3b), Ser-649 (site 3c) and Ser-653 (site 4) by GSK3A an GSK3B. Phosphorylated at Ser-641 by PASK, leading to inactivation; phosphorylation by PASK is inhibited by glycogen. Phosphorylated at Ser-641 by DYRK2, leading to inactivation. Dephosphorylation at Ser-641 and Ser-645 by PP1 activates the enzyme. Phosphorylation at Ser-8 by AMPK inactivates the enzyme activity.

It catalyses the reaction [(1-&gt;4)-alpha-D-glucosyl](n) + UDP-alpha-D-glucose = [(1-&gt;4)-alpha-D-glucosyl](n+1) + UDP + H(+). It functions in the pathway glycan biosynthesis; glycogen biosynthesis. Allosteric activation by glucose-6-phosphate. Phosphorylation reduces the activity towards UDP-glucose. When in the non-phosphorylated state, glycogen synthase does not require glucose-6-phosphate as an allosteric activator; when phosphorylated it does. In terms of biological role, glycogen synthase participates in the glycogen biosynthetic process along with glycogenin and glycogen branching enzyme. Extends the primer composed of a few glucose units formed by glycogenin by adding new glucose units to it. In this context, glycogen synthase transfers the glycosyl residue from UDP-Glc to the non-reducing end of alpha-1,4-glucan. The sequence is that of Glycogen [starch] synthase, muscle (Gys1) from Mus musculus (Mouse).